The primary structure comprises 333 residues: MTQKNLLLLCGGGGDEHSISLLSANFFETQLATLPHFNVLRVELNAKGQYRTQAGELCELTNSKQIRFNDQSKAPWDVDYVIPCIHGYPGETGDIQSYFELINLPYFGCDSEASSNCFNKVTAKMWFSALGIRNTPYIFLNEFNQQAIEETERALEKWGSIFIKAASQGSSVGCYRVDNKEQLANSLEEAFKYSPYVVVEKTINARELEVAAYEVDGEIIATKPGEIICASNTFYSFDEKYAENSQAQTVIEADVDEVIAKQIQEYAIKAFKGMKLRHLSRIDFFLTDENEILLNEINTFPGQTQISMFPKMLQNHGHNFAQYLSGNIMAQLK.

The 206-residue stretch at 124 to 329 folds into the ATP-grasp domain; the sequence is KMWFSALGIR…FAQYLSGNIM (206 aa). 154 to 209 provides a ligand contact to ATP; the sequence is ALEKWGSIFIKAASQGSSVGCYRVDNKEQLANSLEEAFKYSPYVVVEKTINARELE. 3 residues coordinate Mg(2+): Asp283, Glu296, and Asn298.

It belongs to the D-alanine--D-alanine ligase family. The cofactor is Mg(2+). It depends on Mn(2+) as a cofactor.

It is found in the cytoplasm. It carries out the reaction 2 D-alanine + ATP = D-alanyl-D-alanine + ADP + phosphate + H(+). It functions in the pathway cell wall biogenesis; peptidoglycan biosynthesis. Functionally, cell wall formation. The protein is D-alanine--D-alanine ligase of Shewanella halifaxensis (strain HAW-EB4).